Here is a 435-residue protein sequence, read N- to C-terminus: MQRTPRMENLQARFDAVQDQLIDIYEKDTRSLEVQVTYWNLIRREQALFYYARQQGITRLGLYQVPLTSVSERKAKEAIKMSMYLTSLQKSPFAQLSWSLSETSPEMFFAPPESTFKKKGSHVTVVYDKDSNNAMEYAVWGEVFYVDETDTWHKAQSKVDYDGVYYTDAEGKKVYYVHFADDAAHYSVLGQWEVHFENNVLSPPVTSSFPGGPGRRQRPQTGSYSPGHKAPVTSRRRHSSSSDSHSSRRGSRPQSLSRSRSRSRSRSRSPSGSHARQRAPQDSGTNKSPGRQGGRRGDGGGGRGGGGGGVRVREDTFGGQPTQIAGRLGDRPAKAPEQTSRRLAQLIESANDPPVLLLQGCANTLKCFRRRTSHAHPHKFLCMSTSWTWSCKTTTHKSCHRMLVAFSDYEQRRCFLAGVKLPKGVTCVKGSLEAL.

Residues 1–208 (MQRTPRMENL…NVLSPPVTSS (208 aa)) form a transactivation domain region. Residues 203 to 339 (PPVTSSFPGG…DRPAKAPEQT (137 aa)) form a disordered region. Over residues 280–289 (PQDSGTNKSP) the composition is skewed to polar residues. Positions 299–310 (GGGGRGGGGGGV) are enriched in gly residues. The interval 352–435 (DPPVLLLQGC…TCVKGSLEAL (84 aa)) is DNA-binding domain.

It belongs to the papillomaviridae E2 protein family. Binds DNA as homodimer. Interacts with protein E1; this interaction greatly increases E1 DNA-binding activity. Interacts with protein L1; this interaction enhances E2-dependent replication and transcription activation. Interacts with protein L2; this interaction inhibits E2 transcriptional activity but not DNA replication function E2. Interacts with protein E7; this interaction inhibits E7 oncogenic activity. Interacts with host TAF1; this interaction modulates E2-dependent transcriptional regulation. Interacts with host BRD4; this interaction mediates E2 transcriptional activation function. Additionally, the interaction with host BRD4 on mitotic chromosomes mediates tethering of the viral genome. Interacts with host TOPBP1; this interaction is required for optimal viral DNA replication. Phosphorylated.

Its subcellular location is the host nucleus. In terms of biological role, plays a role in the initiation of viral DNA replication. A dimer of E2 interacts with a dimer of E1 in order to improve specificity of E1 DNA binding activity. Once the complex recognizes and binds DNA at specific sites, the E2 dimer is removed from DNA. E2 also regulates viral transcription through binding to the E2RE response element (5'-ACCNNNNNNGGT-3') present in multiple copies in the regulatory regions of the viral genome. Activates or represses transcription depending on E2RE's position with regards to proximal promoter elements including the TATA-box. Repression occurs by sterically hindering the assembly of the transcription initiation complex. The chain is Regulatory protein E2 from Bos taurus papillomavirus 6 (Bovine papillomavirus 6).